The sequence spans 943 residues: Isoleucine--tRNA ligase (943 aa).

The 'HIGH' region motif lies at 58 to 68 (PYANGSIHIGH). L-isoleucyl-5'-AMP is bound at residue Glu567. Positions 608-612 (KMSKS) match the 'KMSKS' region motif. Lys611 lines the ATP pocket. Positions 906, 909, 926, and 929 each coordinate Zn(2+).

Belongs to the class-I aminoacyl-tRNA synthetase family. IleS type 1 subfamily. In terms of assembly, monomer. Zn(2+) is required as a cofactor.

The protein localises to the cytoplasm. The catalysed reaction is tRNA(Ile) + L-isoleucine + ATP = L-isoleucyl-tRNA(Ile) + AMP + diphosphate. Functionally, catalyzes the attachment of isoleucine to tRNA(Ile). As IleRS can inadvertently accommodate and process structurally similar amino acids such as valine, to avoid such errors it has two additional distinct tRNA(Ile)-dependent editing activities. One activity is designated as 'pretransfer' editing and involves the hydrolysis of activated Val-AMP. The other activity is designated 'posttransfer' editing and involves deacylation of mischarged Val-tRNA(Ile). This is Isoleucine--tRNA ligase from Pseudomonas aeruginosa (strain ATCC 15692 / DSM 22644 / CIP 104116 / JCM 14847 / LMG 12228 / 1C / PRS 101 / PAO1).